The chain runs to 269 residues: 4-hydroxy-tetrahydrodipicolinate reductase (269 aa).

Residues 10–15, Glu-36, 99–101, and 123–126 contribute to the NAD(+) site; these read GANGRM, GTT, and AANF. Residue His-156 is the Proton donor/acceptor of the active site. A (S)-2,3,4,5-tetrahydrodipicolinate-binding site is contributed by His-157. The Proton donor role is filled by Lys-160. (S)-2,3,4,5-tetrahydrodipicolinate is bound at residue 166–167; the sequence is GT.

This sequence belongs to the DapB family.

It localises to the cytoplasm. The enzyme catalyses (S)-2,3,4,5-tetrahydrodipicolinate + NAD(+) + H2O = (2S,4S)-4-hydroxy-2,3,4,5-tetrahydrodipicolinate + NADH + H(+). The catalysed reaction is (S)-2,3,4,5-tetrahydrodipicolinate + NADP(+) + H2O = (2S,4S)-4-hydroxy-2,3,4,5-tetrahydrodipicolinate + NADPH + H(+). The protein operates within amino-acid biosynthesis; L-lysine biosynthesis via DAP pathway; (S)-tetrahydrodipicolinate from L-aspartate: step 4/4. Catalyzes the conversion of 4-hydroxy-tetrahydrodipicolinate (HTPA) to tetrahydrodipicolinate. This Neisseria gonorrhoeae (strain ATCC 700825 / FA 1090) protein is 4-hydroxy-tetrahydrodipicolinate reductase.